The chain runs to 38 residues: Cytochrome b6-f complex subunit 5 (38 aa).

A helical membrane pass occupies residues 5-25 (LLLGIVLGLIPITLAGLFVAA).

Belongs to the PetG family. As to quaternary structure, the 4 large subunits of the cytochrome b6-f complex are cytochrome b6, subunit IV (17 kDa polypeptide, PetD), cytochrome f and the Rieske protein, while the 4 small subunits are PetG, PetL, PetM and PetN. The complex functions as a dimer.

Its subcellular location is the cellular thylakoid membrane. Its function is as follows. Component of the cytochrome b6-f complex, which mediates electron transfer between photosystem II (PSII) and photosystem I (PSI), cyclic electron flow around PSI, and state transitions. PetG is required for either the stability or assembly of the cytochrome b6-f complex. The chain is Cytochrome b6-f complex subunit 5 from Rippkaea orientalis (strain PCC 8801 / RF-1) (Cyanothece sp. (strain PCC 8801)).